The sequence spans 486 residues: Serralysin (486 aa).

Position 187 (histidine 187) interacts with Zn(2+). Residue glutamate 188 is part of the active site. Residues histidine 191 and histidine 197 each coordinate Zn(2+). Positions 266, 269, 298, 300, 301, 303, 340, and 342 each coordinate Ca(2+). Hemolysin-type calcium-binding repeat units follow at residues 345–362 (IGGS…ANTL) and 363–380 (KGGA…ADNL).

It belongs to the peptidase M10B family. It depends on Zn(2+) as a cofactor. The cofactor is Ca(2+).

It localises to the secreted. The enzyme catalyses Preferential cleavage of bonds with hydrophobic residues in P1'.. In Photorhabdus luminescens (Xenorhabdus luminescens), this protein is Serralysin (prtA1).